A 1482-amino-acid chain; its full sequence is Pregnancy zone protein (1482 aa).

The first 25 residues, M1–S25, serve as a signal peptide directing secretion. N-linked (GlcNAc...) asparagine glycosylation is found at N54, N69, N246, N392, and N406. The tract at residues C685 to E735 is bait region. Residues N753, N875, and N932 are each glycosylated (N-linked (GlcNAc...) asparagine). The segment at residues C978 to Q981 is a cross-link (isoglutamyl cysteine thioester (Cys-Gln)). N-linked (GlcNAc...) asparagine glycosylation is found at N997 and N1430.

The protein belongs to the protease inhibitor I39 (alpha-2-macroglobulin) family. As to quaternary structure, homotetramer, which consists of two pairs of disulfide-linked chains. As to expression, plasma. Prominent constituent of late-pregnancy sera.

It is found in the secreted. Its function is as follows. Is able to inhibit all four classes of proteinases by a unique 'trapping' mechanism. This protein has a peptide stretch, called the 'bait region' which contains specific cleavage sites for different proteinases. When a proteinase cleaves the bait region, a conformational change is induced in the protein which traps the proteinase. The entrapped enzyme remains active against low molecular weight substrates (activity against high molecular weight substrates is greatly reduced). Following cleavage in the bait region a thioester bond is hydrolyzed and mediates the covalent binding of the protein to the proteinase. This chain is Pregnancy zone protein (PZP), found in Homo sapiens (Human).